The following is a 340-amino-acid chain: DNA-directed RNA polymerase subunit alpha (340 aa).

Residues 1 to 233 (MVREEVAVST…DLFIPFLHAE (233 aa)) are alpha N-terminal domain (alpha-NTD). Positions 266–340 (KKEIALKCIF…GIDLPKNKRF (75 aa)) are alpha C-terminal domain (alpha-CTD).

It belongs to the RNA polymerase alpha chain family. In plastids the minimal PEP RNA polymerase catalytic core is composed of four subunits: alpha, beta, beta', and beta''. When a (nuclear-encoded) sigma factor is associated with the core the holoenzyme is formed, which can initiate transcription.

It localises to the plastid. The protein localises to the chloroplast. It catalyses the reaction RNA(n) + a ribonucleoside 5'-triphosphate = RNA(n+1) + diphosphate. Functionally, DNA-dependent RNA polymerase catalyzes the transcription of DNA into RNA using the four ribonucleoside triphosphates as substrates. The protein is DNA-directed RNA polymerase subunit alpha of Calycanthus floridus var. glaucus (Eastern sweetshrub).